Reading from the N-terminus, the 43-residue chain is Photosystem I reaction center subunit IX (43 aa).

The chain crosses the membrane as a helical span at residues 7 to 27 (YLSTAPVLATFWFGLLAGLLI).

It belongs to the PsaJ family.

The protein localises to the plastid. It is found in the chloroplast thylakoid membrane. Its function is as follows. May help in the organization of the PsaE and PsaF subunits. This is Photosystem I reaction center subunit IX from Gnetum parvifolium (Small-leaved jointfir).